A 209-amino-acid chain; its full sequence is Large ribosomal subunit protein uL4 (209 aa).

Positions 46–71 are disordered; that stretch reads GTSSTKTRSEVRGSSKKPWKQKGTGR. Residues 59 to 71 show a composition bias toward basic residues; it reads SSKKPWKQKGTGR.

This sequence belongs to the universal ribosomal protein uL4 family. Part of the 50S ribosomal subunit.

Functionally, one of the primary rRNA binding proteins, this protein initially binds near the 5'-end of the 23S rRNA. It is important during the early stages of 50S assembly. It makes multiple contacts with different domains of the 23S rRNA in the assembled 50S subunit and ribosome. Its function is as follows. Forms part of the polypeptide exit tunnel. The protein is Large ribosomal subunit protein uL4 of Borrelia garinii subsp. bavariensis (strain ATCC BAA-2496 / DSM 23469 / PBi) (Borreliella bavariensis).